The primary structure comprises 554 residues: Arginine--tRNA ligase (554 aa).

The 'HIGH' region signature appears at 129-139 (ANPTGPLHIGH).

Belongs to the class-I aminoacyl-tRNA synthetase family. As to quaternary structure, monomer.

It localises to the cytoplasm. It catalyses the reaction tRNA(Arg) + L-arginine + ATP = L-arginyl-tRNA(Arg) + AMP + diphosphate. The sequence is that of Arginine--tRNA ligase from Syntrophotalea carbinolica (strain DSM 2380 / NBRC 103641 / GraBd1) (Pelobacter carbinolicus).